The chain runs to 926 residues: Beta-mannosidase A (926 aa).

The N-terminal stretch at 1–21 (MHVKAETVLALLTPAPPSVVG) is a signal peptide. N-linked (GlcNAc...) asparagine glycosylation is found at asparagine 40, asparagine 242, asparagine 277, asparagine 311, and asparagine 342. Glutamate 474 functions as the Proton donor in the catalytic mechanism. N-linked (GlcNAc...) asparagine glycans are attached at residues asparagine 532, asparagine 603, asparagine 626, asparagine 653, asparagine 733, asparagine 756, asparagine 785, asparagine 793, asparagine 819, and asparagine 905.

It belongs to the glycosyl hydrolase 2 family. Beta-mannosidase A subfamily. As to quaternary structure, homodimer.

It is found in the secreted. The enzyme catalyses Hydrolysis of terminal, non-reducing beta-D-mannose residues in beta-D-mannosides.. It participates in glycan metabolism; N-glycan degradation. Functionally, exoglycosidase that cleaves the single beta-linked mannose residue from the non-reducing end of beta-mannosidic oligosaccharides of various complexity and length. Involved in the degradation of polymeric mannan and galactomannan. The protein is Beta-mannosidase A (mndA) of Aspergillus fumigatus (strain CBS 144.89 / FGSC A1163 / CEA10) (Neosartorya fumigata).